The primary structure comprises 172 residues: Thioredoxin M5, chloroplastic (172 aa).

The N-terminal 59 residues, 1–59, are a transit peptide targeting the chloroplast; sequence MALETCFRAWATLHAPQPPSSGGSRDRLLLSGAGSSQSKPRLSVASPSPLRPASRFACQ. A disordered region spans residues 17 to 47; sequence QPPSSGGSRDRLLLSGAGSSQSKPRLSVASP. The 112-residue stretch at 60 to 171 folds into the Thioredoxin domain; the sequence is CSNVVDEVVV…LATIIDKYVS (112 aa). Active-site nucleophile residues include cysteine 95 and cysteine 98. Cysteine 95 and cysteine 98 are disulfide-bonded.

The protein belongs to the thioredoxin family. Plant M-type subfamily. Expressed in leaves and at lower levels in flowers.

It localises to the plastid. The protein resides in the chloroplast. Its function is as follows. Thiol-disulfide oxidoreductase probably involved in the redox regulation of chloroplastic enzymes. Required for chloroplast biogenesis and differentiation. Functions as an electron donor for plastidial 2-Cys peroxiredoxins and participates in hydrogen peroxide scavenging system in chloroplasts. Possesses reducing activity towards insulin disulfide bonds. The protein is Thioredoxin M5, chloroplastic (TRXM) of Oryza sativa subsp. japonica (Rice).